The primary structure comprises 255 residues: Transmembrane protein 81 (255 aa).

The signal sequence occupies residues 1 to 30 (MKVLATSFVLGSLGLAFYLPLVVTTPKTLA). Topologically, residues 31 to 226 (IPEKLQEAVG…HPKWKKKVAS (196 aa)) are extracellular. Residue N45 is glycosylated (N-linked (GlcNAc...) asparagine). Positions 83–171 (TNWICGMLHF…VQLVKNLRLV (89 aa)) constitute an Ig-like domain. Cysteines 104 and 160 form a disulfide. Residues 227 to 247 (ALGIGIAIGVVGGVLVRIVLC) form a helical membrane-spanning segment. The Cytoplasmic segment spans residues 248-255 (ALRGGLQQ).

Forms a complex with IZUMO1 and SPACA6 on spermatocyte cell membrane required for fertilization. In terms of tissue distribution, highly expressed in sperm (at protein level).

Its subcellular location is the cell membrane. Its function is as follows. Essential fertilization factor required for male fertility. Part of a conserved trimeric sperm complex with the essential fertilization factors IZUMO1 and SPACA6 which bridges sperm and oocyte membranes during fertilization by binding to IZUMO1R/JUNO on the oocyte. This is Transmembrane protein 81 from Homo sapiens (Human).